The chain runs to 330 residues: Malate dehydrogenase (330 aa).

13 to 19 contributes to the NAD(+) binding site; the sequence is GAAGQIG. Positions 94 and 100 each coordinate substrate. NAD(+) is bound by residues N107, Q114, and 131 to 133; that span reads VGN. 2 residues coordinate substrate: N133 and R164. H189 acts as the Proton acceptor in catalysis.

This sequence belongs to the LDH/MDH superfamily. MDH type 2 family.

It carries out the reaction (S)-malate + NAD(+) = oxaloacetate + NADH + H(+). Its function is as follows. Catalyzes the reversible oxidation of malate to oxaloacetate. This is Malate dehydrogenase from Deinococcus deserti (strain DSM 17065 / CIP 109153 / LMG 22923 / VCD115).